Reading from the N-terminus, the 87-residue chain is Small ribosomal subunit protein bS20 (87 aa).

The disordered stretch occupies residues 1–26; that stretch reads MANIKSAKKRAIQSEKARKHNASRRS.

It belongs to the bacterial ribosomal protein bS20 family.

Functionally, binds directly to 16S ribosomal RNA. The polypeptide is Small ribosomal subunit protein bS20 (Escherichia coli O17:K52:H18 (strain UMN026 / ExPEC)).